We begin with the raw amino-acid sequence, 591 residues long: Aspartate--tRNA(Asp/Asn) ligase (591 aa).

Glu176 serves as a coordination point for L-aspartate. The interval 200–203 (QLFK) is aspartate. Arg222 provides a ligand contact to L-aspartate. ATP-binding positions include 222–224 (RDE) and Gln231. His450 serves as a coordination point for L-aspartate. Position 484 (Glu484) interacts with ATP. An L-aspartate-binding site is contributed by Arg491. 536 to 539 (GLDR) contributes to the ATP binding site.

It belongs to the class-II aminoacyl-tRNA synthetase family. Type 1 subfamily. In terms of assembly, homodimer.

Its subcellular location is the cytoplasm. It carries out the reaction tRNA(Asx) + L-aspartate + ATP = L-aspartyl-tRNA(Asx) + AMP + diphosphate. Functionally, aspartyl-tRNA synthetase with relaxed tRNA specificity since it is able to aspartylate not only its cognate tRNA(Asp) but also tRNA(Asn). Reaction proceeds in two steps: L-aspartate is first activated by ATP to form Asp-AMP and then transferred to the acceptor end of tRNA(Asp/Asn). This chain is Aspartate--tRNA(Asp/Asn) ligase, found in Bacillus anthracis (strain A0248).